A 481-amino-acid polypeptide reads, in one-letter code: Keratin, type II cuticular Hb1 (481 aa).

The segment at 1-106 (MTCGSGFCGR…PNAQCVKHEE (106 aa)) is head. Residues 106-417 (EKEQIKCLNS…RLLEGEEQRL (312 aa)) enclose the IF rod domain. Positions 107–141 (KEQIKCLNSKFAAFIDKVRFLEQQNKLLETKWQFY) are coil 1A. A linker 1 region spans residues 142 to 151 (QNRKCCESNM). The segment at 152-252 (EPLFEGYIEA…YDEETRILHS (101 aa)) is coil 1B. Lys212 is covalently cross-linked (Glycyl lysine isopeptide (Lys-Gly) (interchain with G-Cter in SUMO1)). Residues 253-269 (HISDTSIVVKMDNSRDL) are linker 12. The coil 2 stretch occupies residues 270–413 (NMDCVVAEIK…TTYRRLLEGE (144 aa)). Residues 414–481 (EQRLCEGVGA…GSAVSCGRKC (68 aa)) form a tail region.

It belongs to the intermediate filament family. In terms of assembly, heterotetramer of two type I and two type II keratins. As to expression, expressed in dorsal skin.

The polypeptide is Keratin, type II cuticular Hb1 (Mus musculus (Mouse)).